The sequence spans 87 residues: Large ribosomal subunit protein bL27 (87 aa).

The interval 1–24 (MATKKAGGSSRNGRDSAGRRLGVK) is disordered.

It belongs to the bacterial ribosomal protein bL27 family.

In Rickettsia massiliae (strain Mtu5), this protein is Large ribosomal subunit protein bL27.